A 77-amino-acid chain; its full sequence is MAATDFVQEMRAVGERLLLKLQRLPQAEPVEIVAFSVIILFTATVLLLLLIACSCCCTHCCCPERRGRKVQVQPTPP.

A helical membrane pass occupies residues 32–52 (IVAFSVIILFTATVLLLLLIA).

The protein localises to the membrane. The protein is Small integral membrane protein 5 (SMIM5) of Homo sapiens (Human).